The primary structure comprises 102 residues: Large ribosomal subunit protein bL21 (102 aa).

This sequence belongs to the bacterial ribosomal protein bL21 family. As to quaternary structure, part of the 50S ribosomal subunit. Contacts protein L20.

Functionally, this protein binds to 23S rRNA in the presence of protein L20. In Geotalea daltonii (strain DSM 22248 / JCM 15807 / FRC-32) (Geobacter daltonii), this protein is Large ribosomal subunit protein bL21.